Here is a 239-residue protein sequence, read N- to C-terminus: Ribosomal RNA small subunit methyltransferase G (239 aa).

S-adenosyl-L-methionine-binding positions include glycine 78, phenylalanine 83, 129 to 130, and arginine 148; that span reads AE.

The protein belongs to the methyltransferase superfamily. RNA methyltransferase RsmG family.

The protein localises to the cytoplasm. Its function is as follows. Specifically methylates the N7 position of a guanine in 16S rRNA. The protein is Ribosomal RNA small subunit methyltransferase G of Clostridium botulinum (strain ATCC 19397 / Type A).